A 272-amino-acid polypeptide reads, in one-letter code: Zinc finger protein 32 (272 aa).

A compositionally biased stretch (basic and acidic residues) spans 50-65 (RREKLEQKSPESKALQ). Residues 50–69 (RREKLEQKSPESKALQEDSP) form a disordered region. C2H2-type zinc fingers lie at residues 76 to 98 (YDCQECGKSFRQKGSLTLHERIH), 104 to 126 (FECTQCGKSFRAKGNLVTHQRIH), and 132 to 154 (YQCKECGKSFSQRGSLAVHERLH). Residues Cys78, Cys81, His94, His98, Cys106, Cys109, His122, His126, Ser140, Gln143, Gly156, Tyr160, Phe197, Lys200, Leu213, Ala217, Cys246, Cys249, His262, and Cys266 each coordinate Zn(2+). 2 consecutive C2H2-type zinc fingers follow at residues 160-182 (YECAICQRSFRNQSNLAVHRRVH) and 188-210 (YRCDQCGKAFSQKGSLIVHIRVH). A C2H2-type 6 zinc finger spans residues 216-238 (YACSHCRKSFHTRGNCLLHGKVH). The CCHC-type zinc finger occupies 244 to 266 (YLCGQCGKSFTQRGSLAVHQRSC).

Belongs to the krueppel C2H2-type zinc-finger protein family.

Its subcellular location is the nucleus. May be involved in transcriptional regulation. The polypeptide is Zinc finger protein 32 (Znf32) (Mus musculus (Mouse)).